An 874-amino-acid chain; its full sequence is Valine--tRNA ligase (874 aa).

The disordered stretch occupies residues 1 to 22 (MTENSQQPQPAPSTELPTQYTP). Positions 57 to 67 (PNVTGSLHLGH) match the 'HIGH' region motif. A 'KMSKS' region motif is present at residues 531–535 (KMSKS). An ATP-binding site is contributed by Lys534. A coiled-coil region spans residues 805–871 (VIDFAAERKR…TRITAQLEKL (67 aa)).

The protein belongs to the class-I aminoacyl-tRNA synthetase family. ValS type 1 subfamily. In terms of assembly, monomer.

Its subcellular location is the cytoplasm. It catalyses the reaction tRNA(Val) + L-valine + ATP = L-valyl-tRNA(Val) + AMP + diphosphate. Functionally, catalyzes the attachment of valine to tRNA(Val). As ValRS can inadvertently accommodate and process structurally similar amino acids such as threonine, to avoid such errors, it has a 'posttransfer' editing activity that hydrolyzes mischarged Thr-tRNA(Val) in a tRNA-dependent manner. This Streptomyces coelicolor (strain ATCC BAA-471 / A3(2) / M145) protein is Valine--tRNA ligase.